Reading from the N-terminus, the 169-residue chain is X polypeptide (169 aa).

Belongs to the IagB/IpgF/P19 family.

This is X polypeptide (yubQ) from Escherichia coli (strain K12).